The chain runs to 496 residues: Thiamine transporter 2 (496 aa).

The Cytoplasmic portion of the chain corresponds to 1–7 (MDCYRTS). Residues 8–28 (PSNSWIYTTVILCIFGFFSMM) traverse the membrane as a helical segment. Residues 29 to 53 (RPSEPFLIPYLSGPDKNLTSEEMTN) are Extracellular-facing. A glycan (N-linked (GlcNAc...) asparagine) is linked at N45. A helical transmembrane segment spans residues 54 to 74 (EIFPVWTYSYLVLLLPVLVLT). The Cytoplasmic portion of the chain corresponds to 75 to 81 (DYVRYKP). The chain crosses the membrane as a helical span at residues 82-102 (VIILQGISFIITWLLLLFGQG). Residues 103-110 (VKTMQVVE) lie on the Extracellular side of the membrane. The helical transmembrane segment at 111-131 (FFYGMVTATEVAYYAYIYSVV) threads the bilayer. The Cytoplasmic portion of the chain corresponds to 132 to 144 (SPEHYQRVSGYCR). A helical transmembrane segment spans residues 145–165 (SVTLVAYTAGSVLAQLLVSLA). An N-linked (GlcNAc...) asparagine glycan is attached at N166. Residues 166-169 (NLSY) are Extracellular-facing. A helical membrane pass occupies residues 170-190 (FYLNVISLASVSVAFLFSLFL). At 191–282 (PMPKKSMFFH…YSSKRLFYWS (92 aa)) the chain is on the cytoplasmic side. Positions 210–248 (SSSVNPVLEETHEGEAPDCEKQKPTSEIPSTSGKLHKGQ) are disordered. Residues 218–233 (EETHEGEAPDCEKQKP) show a composition bias toward basic and acidic residues. Polar residues predominate over residues 234–248 (TSEIPSTSGKLHKGQ). A helical transmembrane segment spans residues 283-303 (LWWAFATAGFNQILNYVQILW). Over 304-316 (DYKSPSQDSSIYN) the chain is Extracellular. Residues 317 to 337 (GAVEATATFGGAVAAFAVGYV) traverse the membrane as a helical segment. Over 338–342 (KVNWD) the chain is Cytoplasmic. Residues 343 to 363 (LLGELALAVFSVVNAGSLFLM) form a helical membrane-spanning segment. The Extracellular portion of the chain corresponds to 364-375 (HYTANIWACYAG). Residues 376–396 (YLIFKSSYMLLITIAVFQIAV) form a helical membrane-spanning segment. Residues 397–405 (NLSVERYAL) lie on the Cytoplasmic side of the membrane. Residues 406-426 (VFGINTFIALVIQTIITVIVV) form a helical membrane-spanning segment. Residues 427–434 (DQRGLNLP) lie on the Extracellular side of the membrane. A helical transmembrane segment spans residues 435–455 (ISIQFLVYGSYFAVIAGIFLM). Topologically, residues 456 to 496 (RSMYIIYSTKSQKDVQSPAPSENPDMSHPEEESNAIMSTKL) are cytoplasmic. Residues 469 to 496 (DVQSPAPSENPDMSHPEEESNAIMSTKL) form a disordered region.

It belongs to the reduced folate carrier (RFC) transporter (TC 2.A.48) family.

It localises to the membrane. The enzyme catalyses thiamine(out) + H(+)(in) = thiamine(in) + H(+)(out). It carries out the reaction pyridoxine(out) + n H(+)(out) = pyridoxine(in) + n H(+)(in). Mediates high affinity thiamine uptake, probably via a proton anti-port mechanism. Has no folate transport activity. Mediates H(+)-dependent pyridoxine transport. The polypeptide is Thiamine transporter 2 (SLC19A3) (Macaca fascicularis (Crab-eating macaque)).